Reading from the N-terminus, the 216-residue chain is Uracil phosphoribosyltransferase (216 aa).

Residues Arg-85, Arg-110, and 135 to 143 (DPMVATGYS) contribute to the 5-phospho-alpha-D-ribose 1-diphosphate site. Residues Ile-200 and 205–207 (GDA) contribute to the uracil site. Asp-206 lines the 5-phospho-alpha-D-ribose 1-diphosphate pocket.

It belongs to the UPRTase family. Requires Mg(2+) as cofactor.

The catalysed reaction is UMP + diphosphate = 5-phospho-alpha-D-ribose 1-diphosphate + uracil. The protein operates within pyrimidine metabolism; UMP biosynthesis via salvage pathway; UMP from uracil: step 1/1. Allosterically activated by GTP. Functionally, catalyzes the conversion of uracil and 5-phospho-alpha-D-ribose 1-diphosphate (PRPP) to UMP and diphosphate. The protein is Uracil phosphoribosyltransferase of Burkholderia lata (strain ATCC 17760 / DSM 23089 / LMG 22485 / NCIMB 9086 / R18194 / 383).